We begin with the raw amino-acid sequence, 232 residues long: Proteasome subunit alpha type-2 (232 aa).

Belongs to the peptidase T1A family. As to quaternary structure, the 26S proteasome consists of a 20S proteasome core and two 19S regulatory subunits. The 20S proteasome core is composed of 28 subunits that are arranged in four stacked rings, resulting in a barrel-shaped structure. The two end rings are each formed by seven alpha subunits, and the two central rings are each formed by seven beta subunits. The catalytic chamber with the active sites is on the inside of the barrel.

Its subcellular location is the cytoplasm. It localises to the nucleus. In terms of biological role, the proteasome is a multicatalytic proteinase complex which is characterized by its ability to cleave peptides with Arg, Phe, Tyr, Leu, and Glu adjacent to the leaving group at neutral or slightly basic pH. The proteasome has an ATP-dependent proteolytic activity. The chain is Proteasome subunit alpha type-2 (psmA2) from Dictyostelium discoideum (Social amoeba).